A 550-amino-acid chain; its full sequence is Chaperonin GroEL 1 (550 aa).

Residues 30-33, Lys-51, 87-91, Gly-415, and Asp-496 contribute to the ATP site; these read TLGP and DGTTT.

Belongs to the chaperonin (HSP60) family. As to quaternary structure, forms a cylinder of 14 subunits composed of two heptameric rings stacked back-to-back. Interacts with the co-chaperonin GroES.

It localises to the cytoplasm. It catalyses the reaction ATP + H2O + a folded polypeptide = ADP + phosphate + an unfolded polypeptide.. Functionally, together with its co-chaperonin GroES, plays an essential role in assisting protein folding. The GroEL-GroES system forms a nano-cage that allows encapsulation of the non-native substrate proteins and provides a physical environment optimized to promote and accelerate protein folding. In Rhodopseudomonas palustris (strain HaA2), this protein is Chaperonin GroEL 1.